The following is a 244-amino-acid chain: MHKNTNKSVLVEDLGLIDYQQAWDYQTQLFNSTIEKKLALRDLPEDEQVAPGNFLIFCEHPHVYTLGKSGKREHLLISEAQLQHAQAAYYEINRGGDITYHGPGQLVGYPIFDLDNFFTDIHKYLRYIEEAIILTLADFNIVAGRIDGLTGVWIESDNPLKARKICAMGVKASRWVTMHGFALNVQPDLTYFKNIVPCGIDDKAVTSIEQELNTTVSMQAVKDYLLKHLTALFELHIENTTHTT.

The BPL/LPL catalytic domain occupies 49 to 237 (VAPGNFLIFC…HLTALFELHI (189 aa)). Substrate contacts are provided by residues 94-101 (RGGDITYH), 167-169 (AMG), and 180-182 (GFA). Cysteine 198 acts as the Acyl-thioester intermediate in catalysis.

The protein belongs to the LipB family.

It localises to the cytoplasm. The enzyme catalyses octanoyl-[ACP] + L-lysyl-[protein] = N(6)-octanoyl-L-lysyl-[protein] + holo-[ACP] + H(+). It functions in the pathway protein modification; protein lipoylation via endogenous pathway; protein N(6)-(lipoyl)lysine from octanoyl-[acyl-carrier-protein]: step 1/2. Catalyzes the transfer of endogenously produced octanoic acid from octanoyl-acyl-carrier-protein onto the lipoyl domains of lipoate-dependent enzymes. Lipoyl-ACP can also act as a substrate although octanoyl-ACP is likely to be the physiological substrate. This is Octanoyltransferase from Cytophaga hutchinsonii (strain ATCC 33406 / DSM 1761 / CIP 103989 / NBRC 15051 / NCIMB 9469 / D465).